The following is a 297-amino-acid chain: Formamidopyrimidine-DNA glycosylase (297 aa).

The active-site Schiff-base intermediate with DNA is Pro2. The active-site Proton donor is the Glu3. The active-site Proton donor; for beta-elimination activity is Lys58. Positions 106, 133, and 178 each coordinate DNA. The segment at 263 to 297 (FVYDRAGEPCRICGTPIRQILQGQRSTFYCPHCQH) adopts an FPG-type zinc-finger fold. Catalysis depends on Arg287, which acts as the Proton donor; for delta-elimination activity.

The protein belongs to the FPG family. In terms of assembly, monomer. Zn(2+) is required as a cofactor.

The catalysed reaction is Hydrolysis of DNA containing ring-opened 7-methylguanine residues, releasing 2,6-diamino-4-hydroxy-5-(N-methyl)formamidopyrimidine.. It catalyses the reaction 2'-deoxyribonucleotide-(2'-deoxyribose 5'-phosphate)-2'-deoxyribonucleotide-DNA = a 3'-end 2'-deoxyribonucleotide-(2,3-dehydro-2,3-deoxyribose 5'-phosphate)-DNA + a 5'-end 5'-phospho-2'-deoxyribonucleoside-DNA + H(+). Its function is as follows. Involved in base excision repair of DNA damaged by oxidation or by mutagenic agents. Acts as a DNA glycosylase that recognizes and removes damaged bases. Has a preference for oxidized purines, such as 7,8-dihydro-8-oxoguanine (8-oxoG). Has AP (apurinic/apyrimidinic) lyase activity and introduces nicks in the DNA strand. Cleaves the DNA backbone by beta-delta elimination to generate a single-strand break at the site of the removed base with both 3'- and 5'-phosphates. This chain is Formamidopyrimidine-DNA glycosylase, found in Cupriavidus metallidurans (strain ATCC 43123 / DSM 2839 / NBRC 102507 / CH34) (Ralstonia metallidurans).